We begin with the raw amino-acid sequence, 485 residues long: NADH-quinone oxidoreductase subunit N (485 aa).

Transmembrane regions (helical) follow at residues 8 to 28 (LIAL…MLSI), 35 to 55 (FLNA…LWFV), 71 to 91 (GFAM…CTFA), 105 to 125 (FYLL…ANHL), 127 to 147 (ALFL…GYAF), 159 to 179 (YTIL…LVYA), 203 to 223 (LLAG…LVPF), 235 to 255 (PAPV…GVVM), 271 to 291 (VVLG…ALSQ), 297 to 317 (LLGY…IALQ), 326 to 346 (VGVY…VVSL), 373 to 393 (AAVM…LGFI), 408 to 430 (WWLV…RVAV), and 455 to 475 (IVVL…QPLI).

This sequence belongs to the complex I subunit 2 family. As to quaternary structure, NDH-1 is composed of 13 different subunits. Subunits NuoA, H, J, K, L, M, N constitute the membrane sector of the complex.

The protein localises to the cell inner membrane. It catalyses the reaction a quinone + NADH + 5 H(+)(in) = a quinol + NAD(+) + 4 H(+)(out). In terms of biological role, NDH-1 shuttles electrons from NADH, via FMN and iron-sulfur (Fe-S) centers, to quinones in the respiratory chain. The immediate electron acceptor for the enzyme in this species is believed to be ubiquinone. Couples the redox reaction to proton translocation (for every two electrons transferred, four hydrogen ions are translocated across the cytoplasmic membrane), and thus conserves the redox energy in a proton gradient. The chain is NADH-quinone oxidoreductase subunit N from Salmonella typhimurium (strain LT2 / SGSC1412 / ATCC 700720).